The chain runs to 335 residues: Holliday junction branch migration complex subunit RuvB (335 aa).

The segment at 1–181 (MTRILDNDLI…FGITGHMEYY (181 aa)) is large ATPase domain (RuvB-L). Residues Leu20, Arg21, Gly62, Lys65, Thr66, Thr67, 128–130 (EDF), Arg171, Tyr181, and Arg218 contribute to the ATP site. Thr66 lines the Mg(2+) pocket. The small ATPAse domain (RuvB-S) stretch occupies residues 182-252 (QTADLTEIVE…ITDKALTMLD (71 aa)). The tract at residues 255–335 (QEGLDYVDQK…GYPYEKTIKT (81 aa)) is head domain (RuvB-H). 4 residues coordinate DNA: Arg291, Arg310, Arg312, and Arg315.

Belongs to the RuvB family. Homohexamer. Forms an RuvA(8)-RuvB(12)-Holliday junction (HJ) complex. HJ DNA is sandwiched between 2 RuvA tetramers; dsDNA enters through RuvA and exits via RuvB. An RuvB hexamer assembles on each DNA strand where it exits the tetramer. Each RuvB hexamer is contacted by two RuvA subunits (via domain III) on 2 adjacent RuvB subunits; this complex drives branch migration. In the full resolvosome a probable DNA-RuvA(4)-RuvB(12)-RuvC(2) complex forms which resolves the HJ.

Its subcellular location is the cytoplasm. The catalysed reaction is ATP + H2O = ADP + phosphate + H(+). In terms of biological role, the RuvA-RuvB-RuvC complex processes Holliday junction (HJ) DNA during genetic recombination and DNA repair, while the RuvA-RuvB complex plays an important role in the rescue of blocked DNA replication forks via replication fork reversal (RFR). RuvA specifically binds to HJ cruciform DNA, conferring on it an open structure. The RuvB hexamer acts as an ATP-dependent pump, pulling dsDNA into and through the RuvAB complex. RuvB forms 2 homohexamers on either side of HJ DNA bound by 1 or 2 RuvA tetramers; 4 subunits per hexamer contact DNA at a time. Coordinated motions by a converter formed by DNA-disengaged RuvB subunits stimulates ATP hydrolysis and nucleotide exchange. Immobilization of the converter enables RuvB to convert the ATP-contained energy into a lever motion, pulling 2 nucleotides of DNA out of the RuvA tetramer per ATP hydrolyzed, thus driving DNA branch migration. The RuvB motors rotate together with the DNA substrate, which together with the progressing nucleotide cycle form the mechanistic basis for DNA recombination by continuous HJ branch migration. Branch migration allows RuvC to scan DNA until it finds its consensus sequence, where it cleaves and resolves cruciform DNA. The protein is Holliday junction branch migration complex subunit RuvB of Streptococcus equi subsp. equi (strain 4047).